We begin with the raw amino-acid sequence, 244 residues long: Putative B3 domain-containing protein At2g31460 (244 aa).

Positions 49–147 (SSMHMENSGF…PVHDGVNLSG (99 aa)) form a DNA-binding region, TF-B3. Disordered regions lie at residues 175–196 (DGNL…QDSV) and 217–244 (DSQG…GHYQ). Residues 235–244 (GSIRDSGHYQ) are compositionally biased toward basic and acidic residues.

The protein resides in the nucleus. The protein is Putative B3 domain-containing protein At2g31460 of Arabidopsis thaliana (Mouse-ear cress).